A 272-amino-acid polypeptide reads, in one-letter code: Phosphoglycolate phosphatase (272 aa).

Aspartate 19 acts as the Nucleophile in catalysis. 3 residues coordinate Mg(2+): aspartate 19, aspartate 21, and aspartate 182.

Belongs to the HAD-like hydrolase superfamily. CbbY/CbbZ/Gph/YieH family. The cofactor is Mg(2+).

The enzyme catalyses 2-phosphoglycolate + H2O = glycolate + phosphate. It functions in the pathway organic acid metabolism; glycolate biosynthesis; glycolate from 2-phosphoglycolate: step 1/1. Specifically catalyzes the dephosphorylation of 2-phosphoglycolate. Is involved in the dissimilation of the intracellular 2-phosphoglycolate formed during the DNA repair of 3'-phosphoglycolate ends, a major class of DNA lesions induced by oxidative stress. This Pseudomonas syringae pv. tomato (strain ATCC BAA-871 / DC3000) protein is Phosphoglycolate phosphatase.